The primary structure comprises 199 residues: ATP-dependent Clp protease proteolytic subunit (199 aa).

Ser97 functions as the Nucleophile in the catalytic mechanism. His122 is an active-site residue.

It belongs to the peptidase S14 family. Fourteen ClpP subunits assemble into 2 heptameric rings which stack back to back to give a disk-like structure with a central cavity, resembling the structure of eukaryotic proteasomes.

The protein resides in the cytoplasm. It carries out the reaction Hydrolysis of proteins to small peptides in the presence of ATP and magnesium. alpha-casein is the usual test substrate. In the absence of ATP, only oligopeptides shorter than five residues are hydrolyzed (such as succinyl-Leu-Tyr-|-NHMec, and Leu-Tyr-Leu-|-Tyr-Trp, in which cleavage of the -Tyr-|-Leu- and -Tyr-|-Trp bonds also occurs).. Its function is as follows. Cleaves peptides in various proteins in a process that requires ATP hydrolysis. Has a chymotrypsin-like activity. Plays a major role in the degradation of misfolded proteins. The chain is ATP-dependent Clp protease proteolytic subunit from Geobacter metallireducens (strain ATCC 53774 / DSM 7210 / GS-15).